We begin with the raw amino-acid sequence, 2957 residues long: Toxin PAU_02230 (2957 aa).

The interval Thr949 to Ala968 is disordered. The segment at Glu2115–Lys2144 is membrane localization domain that interacts with the inner leaflet of the plasma membrane. The tract at residues Glu2115–Pro2449 is tyrosine glycosyltransferase PaToxG. UDP-N-acetyl-alpha-D-glucosamine-binding positions include Ile2169–Ile2171 and Ser2259–Asp2260. A divalent metal cation contacts are provided by Asp2276 and Asp2278. The DxDD motif motif lies at Asp2276–Asp2279. UDP-N-acetyl-alpha-D-glucosamine is bound at residue Asn2312. The sseI-like deamidase PaToxD stretch occupies residues Lys2450–Asn2672. Catalysis depends on for deamidase activity residues Cys2509, His2547, and Asp2562. Residues Asn2667–Ser2705 form a disordered region.

A divalent metal cation serves as cofactor.

The protein resides in the secreted. The protein localises to the host cell membrane. It carries out the reaction L-tyrosyl-[protein] + UDP-N-acetyl-alpha-D-glucosamine = O-(N-acetyl-alpha-D-glucosaminyl)-L-tyrosyl-[protein] + UDP + H(+). It catalyses the reaction L-glutaminyl-[protein] + H2O = L-glutamyl-[protein] + NH4(+). Its function is as follows. Toxin that acts on host cells by modifying Rho proteins by tyrosine GlcNAcylation and heterotrimeric G alpha proteins by deamidation. Catalyzes the mono-O-GlcNAcylation of small GTPases of the Rho family (RhoA, RhoB, RhoC, Rac1, Rac2, Rac3, Cdc42) in eukaryotic host cells at the conserved tyrosine residue located in the switch I region (Tyr-32/34), using UDP-N-acetylglucosamine (UDP-GlcNAc) as the sugar donor; other GTPases of the Rho, Ras or Rab families are not substrates. Tyrosine glycosylation inhibits Rho activation and prevents interaction with downstream effectors, resulting in actin disassembly, inhibition of phagocytosis, cell rounding, and toxicity toward insects and mammalian cells. Also catalyzes the deamidation of the catalytic glutamine in heterotrimeric G alpha proteins (Gi, Gq/11), which blocks GTP hydrolysis and arrests the G proteins in a permanent active state leading to activation of Rho GTPases. Thus, PaTox hijacks host GTPase signaling in a bidirectional manner by deamidation-induced activation and glycosylation-induced inactivation of GTPases. In Photorhabdus asymbiotica subsp. asymbiotica (strain ATCC 43949 / 3105-77) (Xenorhabdus luminescens (strain 2)), this protein is Toxin PAU_02230.